A 77-amino-acid chain; its full sequence is U14-theraphotoxin-Cg1b (77 aa).

The first 21 residues, 1–21 (MKTSVLLVILGIAAITVQCTA), serve as a signal peptide directing secretion. Positions 22–49 (SESVEQDSLRTFVDAVLGWNAEMASEAR) are excised as a propeptide. Intrachain disulfides connect Cys50/Cys64, Cys57/Cys69, and Cys63/Cys75.

The protein belongs to the neurotoxin 10 (Hwtx-1) family. 65 (Jztx-21) subfamily. In terms of tissue distribution, expressed by the venom gland.

It is found in the secreted. Functionally, probable ion channel inhibitor. The polypeptide is U14-theraphotoxin-Cg1b (Chilobrachys guangxiensis (Chinese earth tiger tarantula)).